A 62-amino-acid polypeptide reads, in one-letter code: Large ribosomal subunit protein bL28 (62 aa).

It belongs to the bacterial ribosomal protein bL28 family.

The chain is Large ribosomal subunit protein bL28 from Onion yellows phytoplasma (strain OY-M).